A 336-amino-acid chain; its full sequence is Protein-glutamate methylesterase/protein-glutamine glutaminase 2 (336 aa).

The 118-residue stretch at 2–119 (KIAIVNDMPM…PNPKEAAAPL (118 aa)) folds into the Response regulatory domain. Position 53 is a 4-aspartylphosphate (Asp-53). Positions 147–336 (PSRRDRLVAI…APRLIEVFTQ (190 aa)) constitute a CheB-type methylesterase domain. Residues Ser-159, His-186, and Asp-279 contribute to the active site.

It belongs to the CheB family. Phosphorylated by CheA. Phosphorylation of the N-terminal regulatory domain activates the methylesterase activity.

It is found in the cytoplasm. It carries out the reaction [protein]-L-glutamate 5-O-methyl ester + H2O = L-glutamyl-[protein] + methanol + H(+). The enzyme catalyses L-glutaminyl-[protein] + H2O = L-glutamyl-[protein] + NH4(+). Its function is as follows. Involved in chemotaxis. Part of a chemotaxis signal transduction system that modulates chemotaxis in response to various stimuli. Catalyzes the demethylation of specific methylglutamate residues introduced into the chemoreceptors (methyl-accepting chemotaxis proteins or MCP) by CheR. Also mediates the irreversible deamidation of specific glutamine residues to glutamic acid. In Pseudomonas syringae pv. syringae (strain B728a), this protein is Protein-glutamate methylesterase/protein-glutamine glutaminase 2.